We begin with the raw amino-acid sequence, 309 residues long: Aspartate carbamoyltransferase catalytic subunit (309 aa).

2 residues coordinate carbamoyl phosphate: Arg-58 and Thr-59. Lys-87 is a binding site for L-aspartate. Residues Arg-108, His-136, and Gln-139 each contribute to the carbamoyl phosphate site. Positions 168 and 229 each coordinate L-aspartate. Leu-268 and Pro-269 together coordinate carbamoyl phosphate.

The protein belongs to the aspartate/ornithine carbamoyltransferase superfamily. ATCase family. In terms of assembly, heterooligomer of catalytic and regulatory chains.

The enzyme catalyses carbamoyl phosphate + L-aspartate = N-carbamoyl-L-aspartate + phosphate + H(+). The protein operates within pyrimidine metabolism; UMP biosynthesis via de novo pathway; (S)-dihydroorotate from bicarbonate: step 2/3. Catalyzes the condensation of carbamoyl phosphate and aspartate to form carbamoyl aspartate and inorganic phosphate, the committed step in the de novo pyrimidine nucleotide biosynthesis pathway. The protein is Aspartate carbamoyltransferase catalytic subunit of Methanosarcina mazei (strain ATCC BAA-159 / DSM 3647 / Goe1 / Go1 / JCM 11833 / OCM 88) (Methanosarcina frisia).